The chain runs to 245 residues: MSVHSKLYEGKAKILYTTDEPEVLLADFKDDATAFNAQKRGSILGKGRINCSISSQLFQQLEASGIKTHFIDSPSPNQMRVKAVKIIPIEVVIRNIAAGSLSQQTGIELGTVLKQPLVEFYYKNDQLGDPLLTRDRLLLMELATAEQVEEITHLALQINDFLKNFWQNCGITLVDFKLEFGLDSQQQILLADEISPDTCRLWNTTEADPNRRVMDKDRFRRDLGNVEDAYQEVLQRVLTAVEIKN.

This sequence belongs to the SAICAR synthetase family.

The catalysed reaction is 5-amino-1-(5-phospho-D-ribosyl)imidazole-4-carboxylate + L-aspartate + ATP = (2S)-2-[5-amino-1-(5-phospho-beta-D-ribosyl)imidazole-4-carboxamido]succinate + ADP + phosphate + 2 H(+). It functions in the pathway purine metabolism; IMP biosynthesis via de novo pathway; 5-amino-1-(5-phospho-D-ribosyl)imidazole-4-carboxamide from 5-amino-1-(5-phospho-D-ribosyl)imidazole-4-carboxylate: step 1/2. This is Phosphoribosylaminoimidazole-succinocarboxamide synthase from Trichormus variabilis (strain ATCC 29413 / PCC 7937) (Anabaena variabilis).